The chain runs to 255 residues: Leucyl/phenylalanyl-tRNA--protein transferase (255 aa).

Belongs to the L/F-transferase family.

Its subcellular location is the cytoplasm. The catalysed reaction is N-terminal L-lysyl-[protein] + L-leucyl-tRNA(Leu) = N-terminal L-leucyl-L-lysyl-[protein] + tRNA(Leu) + H(+). It carries out the reaction N-terminal L-arginyl-[protein] + L-leucyl-tRNA(Leu) = N-terminal L-leucyl-L-arginyl-[protein] + tRNA(Leu) + H(+). The enzyme catalyses L-phenylalanyl-tRNA(Phe) + an N-terminal L-alpha-aminoacyl-[protein] = an N-terminal L-phenylalanyl-L-alpha-aminoacyl-[protein] + tRNA(Phe). Its function is as follows. Functions in the N-end rule pathway of protein degradation where it conjugates Leu, Phe and, less efficiently, Met from aminoacyl-tRNAs to the N-termini of proteins containing an N-terminal arginine or lysine. In Polaromonas sp. (strain JS666 / ATCC BAA-500), this protein is Leucyl/phenylalanyl-tRNA--protein transferase.